We begin with the raw amino-acid sequence, 221 residues long: MSTEPNSPFVDDPLSAVDARILGSLVEKQATTPETYPLTLNALVLACNQKTSRDPVMNLTPGQVGQSLRQLEGRGLVRLVMGSRADRWEHTLGKGLELVAPQVALLGLLFLRGPQTLSELLTRSNRLHDFDDVEQIRHHLERLAGRGLAVHLERRAGQREERYMHLLGSQADLEAAVEAMGSDPERAAPAALSADAEARIAELETRLAALEERLARLEGGA.

This sequence belongs to the UPF0502 family.

The chain is UPF0502 protein PA14_19450 from Pseudomonas aeruginosa (strain UCBPP-PA14).